We begin with the raw amino-acid sequence, 301 residues long: 4-hydroxy-tetrahydrodipicolinate synthase (301 aa).

A pyruvate-binding site is contributed by T46. The Proton donor/acceptor role is filled by Y134. The Schiff-base intermediate with substrate role is filled by K162. I203 is a pyruvate binding site.

The protein belongs to the DapA family. As to quaternary structure, homotetramer; dimer of dimers.

It localises to the cytoplasm. The enzyme catalyses L-aspartate 4-semialdehyde + pyruvate = (2S,4S)-4-hydroxy-2,3,4,5-tetrahydrodipicolinate + H2O + H(+). It participates in amino-acid biosynthesis; L-lysine biosynthesis via DAP pathway; (S)-tetrahydrodipicolinate from L-aspartate: step 3/4. Catalyzes the condensation of (S)-aspartate-beta-semialdehyde [(S)-ASA] and pyruvate to 4-hydroxy-tetrahydrodipicolinate (HTPA). This Anaplasma marginale (strain St. Maries) protein is 4-hydroxy-tetrahydrodipicolinate synthase.